The primary structure comprises 485 residues: Glutamate--tRNA ligase (485 aa).

The short motif at 11–21 is the 'HIGH' region element; it reads PSPTGHLHIGN. Positions 252–256 match the 'KMSKS' region motif; it reads KLSKR. Lysine 255 contacts ATP.

This sequence belongs to the class-I aminoacyl-tRNA synthetase family. Glutamate--tRNA ligase type 1 subfamily. As to quaternary structure, monomer.

The protein resides in the cytoplasm. The catalysed reaction is tRNA(Glu) + L-glutamate + ATP = L-glutamyl-tRNA(Glu) + AMP + diphosphate. In terms of biological role, catalyzes the attachment of glutamate to tRNA(Glu) in a two-step reaction: glutamate is first activated by ATP to form Glu-AMP and then transferred to the acceptor end of tRNA(Glu). The protein is Glutamate--tRNA ligase of Bacillus cytotoxicus (strain DSM 22905 / CIP 110041 / 391-98 / NVH 391-98).